The sequence spans 209 residues: Guanylate kinase (209 aa).

One can recognise a Guanylate kinase-like domain in the interval 5–184 (GLLIVFSGPS…AAERVKRVIE (180 aa)). 12 to 19 (GPSGVGKG) is an ATP binding site.

It belongs to the guanylate kinase family.

The protein resides in the cytoplasm. The enzyme catalyses GMP + ATP = GDP + ADP. In terms of biological role, essential for recycling GMP and indirectly, cGMP. This is Guanylate kinase from Streptococcus thermophilus (strain CNRZ 1066).